The chain runs to 78 residues: Calcium/calmodulin-dependent protein kinase II inhibitor 1 (78 aa).

The CAMK2 inhibitory domain stretch occupies residues Asn41 to Lys68.

Belongs to the CAMK2N family. In terms of assembly, interacts with CAMK2B; the presence of Ca(2+)/calmodulin increases the interaction but is not essential. Interacts with CAMK2A; this interaction requires CAMK2A activation by Ca(2+).

The protein resides in the synapse. It is found in the cell projection. Its subcellular location is the dendrite. It localises to the postsynaptic density. In terms of biological role, potent and specific inhibitor of CaM-kinase II (CAMK2). Plays a role in the maintenance of long-term retrieval-induced memory in response to contextual fear. Modulates blood pressure and vascular reactivity via regulation of CAMK2 activity in addition to regulation of left ventricular mass. Mediates the NLRP3 inflammasome in cardiomyocytes via acting as an inhibitor of the MAPK14/p38 and MAPK8/JNK pathways, thereby regulating ventricular remodeling and cardiac rhythm post-myocardial infarction. Negatively effects insulin sensitivity and promotes lipid formation in adipose tissues independent of CAMK2 signaling. The polypeptide is Calcium/calmodulin-dependent protein kinase II inhibitor 1 (CAMK2N1) (Bos taurus (Bovine)).